Reading from the N-terminus, the 237-residue chain is MAIYLPELDPENTLFPKPETALDEPNGLLAFGGDLQPARLLAAYRQGIFPWYSNGEPILWWSPAPRAIFLPNEFKPSKSLRKFYRKSGYQITLNNACHDVIRQCANCRSPEETWITEDMIQAYQTMHNLGHCHSVEVWHQDKLVGGFYGLQIGSVFCGESMFSLADNASKIALWFFCRHFSNQGGTLIDCQVMNNHLESLGALEIPRAPFMQQLHQQRAAIIKPNSFVPQTLKIPIE.

The protein belongs to the L/F-transferase family.

Its subcellular location is the cytoplasm. It catalyses the reaction N-terminal L-lysyl-[protein] + L-leucyl-tRNA(Leu) = N-terminal L-leucyl-L-lysyl-[protein] + tRNA(Leu) + H(+). The catalysed reaction is N-terminal L-arginyl-[protein] + L-leucyl-tRNA(Leu) = N-terminal L-leucyl-L-arginyl-[protein] + tRNA(Leu) + H(+). The enzyme catalyses L-phenylalanyl-tRNA(Phe) + an N-terminal L-alpha-aminoacyl-[protein] = an N-terminal L-phenylalanyl-L-alpha-aminoacyl-[protein] + tRNA(Phe). Functionally, functions in the N-end rule pathway of protein degradation where it conjugates Leu, Phe and, less efficiently, Met from aminoacyl-tRNAs to the N-termini of proteins containing an N-terminal arginine or lysine. This chain is Leucyl/phenylalanyl-tRNA--protein transferase, found in Photobacterium profundum (strain SS9).